The sequence spans 769 residues: Apoptotic enhancer 1 protein (769 aa).

Disordered stretches follow at residues 69 to 88 (PVRV…SQQY), 265 to 396 (SVEP…LDES), and 451 to 518 (PQLP…RSDD). Residues 275-284 (QQQQPSPQMM) show a composition bias toward low complexity. The segment covering 285–295 (KSEEFSEKRDL) has biased composition (basic and acidic residues). Residues 339 to 353 (STDPHSNHSSPSTSS) are compositionally biased toward low complexity. Composition is skewed to polar residues over residues 354–378 (QKAP…TMTR), 453–467 (LPTS…TSET), and 474–491 (NSES…NNLE). 2 ANK repeats span residues 585–617 (EGIT…AQDS) and 618–652 (DGWT…TLSD). The 63-residue stretch at 684-746 (INTGKVYAAY…PRTYLALYPS (63 aa)) folds into the SH3 domain.

This sequence belongs to the iASPP family. As to quaternary structure, interacts with cep-1/p53; the interaction inhibits pro-apoptotic activity of cep-1.

It localises to the nucleus. Functionally, negetively regulates apoptosis via its interaction with cep-1. This chain is Apoptotic enhancer 1 protein, found in Caenorhabditis elegans.